The chain runs to 193 residues: Potassium-transporting ATPase KdpC subunit (193 aa).

Residues 14-34 (ITFTFLVLCGLVYPLIVTGIA) traverse the membrane as a helical segment.

Belongs to the KdpC family. In terms of assembly, the system is composed of three essential subunits: KdpA, KdpB and KdpC.

It localises to the cell membrane. In terms of biological role, part of the high-affinity ATP-driven potassium transport (or Kdp) system, which catalyzes the hydrolysis of ATP coupled with the electrogenic transport of potassium into the cytoplasm. This subunit acts as a catalytic chaperone that increases the ATP-binding affinity of the ATP-hydrolyzing subunit KdpB by the formation of a transient KdpB/KdpC/ATP ternary complex. This chain is Potassium-transporting ATPase KdpC subunit, found in Bacillus cereus (strain G9842).